The chain runs to 96 residues: Large ribosomal subunit protein bL28 (96 aa).

The segment at 1-24 is disordered; the sequence is MSRSCELTGKGVQSGHNVSHANNK.

Belongs to the bacterial ribosomal protein bL28 family.

This Sinorhizobium fredii (strain NBRC 101917 / NGR234) protein is Large ribosomal subunit protein bL28.